The chain runs to 254 residues: Insulin-like growth factor-binding protein 4 (254 aa).

Positions 1-21 (MLPFGLVAALLLAAGPRPSLG) are cleaved as a signal peptide. Residues 23–103 (EAIHCPPCSE…MHGQGVCTEL (81 aa)) form the IGFBP N-terminal domain. 6 disulfide bridges follow: Cys-27–Cys-53, Cys-30–Cys-55, Cys-38–Cys-56, Cys-44–Cys-59, Cys-67–Cys-80, and Cys-74–Cys-100. N-linked (GlcNAc...) asparagine glycosylation is present at Asn-125. The cysteines at positions 131 and 138 are disulfide-linked. Residues 149–169 (RSKMKVVGTPREEPRPVPQGS) are disordered. Residues 167 to 245 (QGSCQSELHR…GLEPKGELDC (79 aa)) form the Thyroglobulin type-1 domain. Intrachain disulfides connect Cys-170–Cys-200, Cys-211–Cys-222, and Cys-224–Cys-245. Ser-251 is subject to Phosphoserine.

In terms of assembly, binds IGF2 more than IGF1.

Its subcellular location is the secreted. Functionally, IGF-binding proteins prolong the half-life of the IGFs and have been shown to either inhibit or stimulate the growth promoting effects of the IGFs on cell culture. They alter the interaction of IGFs with their cell surface receptors. In Rattus norvegicus (Rat), this protein is Insulin-like growth factor-binding protein 4 (Igfbp4).